The primary structure comprises 468 residues: UDP-N-acetylmuramate--L-alanine ligase (468 aa).

112–118 (GTHGKTT) is a binding site for ATP.

It belongs to the MurCDEF family.

It localises to the cytoplasm. It carries out the reaction UDP-N-acetyl-alpha-D-muramate + L-alanine + ATP = UDP-N-acetyl-alpha-D-muramoyl-L-alanine + ADP + phosphate + H(+). It functions in the pathway cell wall biogenesis; peptidoglycan biosynthesis. Cell wall formation. This chain is UDP-N-acetylmuramate--L-alanine ligase, found in Bordetella pertussis (strain Tohama I / ATCC BAA-589 / NCTC 13251).